A 429-amino-acid polypeptide reads, in one-letter code: 3-phosphoshikimate 1-carboxyvinyltransferase (429 aa).

K23, S24, and R28 together coordinate 3-phosphoshikimate. K23 serves as a coordination point for phosphoenolpyruvate. The phosphoenolpyruvate site is built by G95 and R123. Positions 168, 170, 316, and 343 each coordinate 3-phosphoshikimate. Phosphoenolpyruvate is bound at residue Q170. D316 (proton acceptor) is an active-site residue. Residues R347 and R389 each coordinate phosphoenolpyruvate.

Belongs to the EPSP synthase family. In terms of assembly, monomer.

It is found in the cytoplasm. It carries out the reaction 3-phosphoshikimate + phosphoenolpyruvate = 5-O-(1-carboxyvinyl)-3-phosphoshikimate + phosphate. It functions in the pathway metabolic intermediate biosynthesis; chorismate biosynthesis; chorismate from D-erythrose 4-phosphate and phosphoenolpyruvate: step 6/7. Its function is as follows. Catalyzes the transfer of the enolpyruvyl moiety of phosphoenolpyruvate (PEP) to the 5-hydroxyl of shikimate-3-phosphate (S3P) to produce enolpyruvyl shikimate-3-phosphate and inorganic phosphate. The chain is 3-phosphoshikimate 1-carboxyvinyltransferase from Oceanobacillus iheyensis (strain DSM 14371 / CIP 107618 / JCM 11309 / KCTC 3954 / HTE831).